Here is a 180-residue protein sequence, read N- to C-terminus: uncharacterized protein (180 aa).

One can recognise a Macro domain in the interval 1-180 (MVEFEIVKGD…KDYERALRAV (180 aa)).

This is an uncharacterized protein from Thermococcus kodakarensis (strain ATCC BAA-918 / JCM 12380 / KOD1) (Pyrococcus kodakaraensis (strain KOD1)).